A 316-amino-acid polypeptide reads, in one-letter code: C-type lectin domain family 10 member A (316 aa).

Residues 1–39 (MTRTYENFQYLENKVKVQGFKNGPLPLQSLLQRLCSGPC) lie on the Cytoplasmic side of the membrane. The Endocytosis signal motif lies at 5-8 (YENF). The chain crosses the membrane as a helical; Signal-anchor for type II membrane protein span at residues 40 to 60 (HLLLSLGLGLLLLVIICVVGF). Topologically, residues 61–316 (QNSKFQRDLV…GLGQTSQESH (256 aa)) are extracellular. Residues Asn-78 and Asn-173 are each glycosylated (N-linked (GlcNAc...) asparagine). Residues 85 to 176 (AEIQALTSQG…VATLNNNAST (92 aa)) are a coiled coil. 3 disulfides stabilise this stretch: Cys-181/Cys-192, Cys-209/Cys-304, and Cys-282/Cys-296. One can recognise a C-type lectin domain in the interval 188 to 305 (HQDSCYWFSH…CQRPYHWVCE (118 aa)). Residues Val-218, Asn-220, Glu-224, and Asp-243 each contribute to the Ca(2+) site. Gln-267 and Asp-269 together coordinate a glycoprotein. The Ca(2+) site is built by Asp-269, Asp-270, Glu-280, and Asp-281. Glu-280 is an a glycoprotein binding site. A glycoprotein contacts are provided by His-286 and Asn-292. 3 residues coordinate Ca(2+): Asn-292, Asp-293, and Glu-305.

In terms of assembly, interacts with A-, B- and C-domain containing PTPRC/CD45 isoforms: isoform 1/CD45ABC, isoform 3/CD45AB, isoform 5/CD45BC and isoform 7/CD45B. Does not interact with PTPRC/CD45 isoform 2/CD45RO, a memory T cell marker. In terms of tissue distribution, expressed in myeloid antigen presenting cells in lymph nodes and skin (at protein level). Expressed in dermal dendritic cells (at protein level).

Its subcellular location is the cell membrane. The protein localises to the early endosome membrane. The protein resides in the lysosome membrane. Its function is as follows. C-type lectin receptor involved in recognition of N-acetylgalactosamine (GalNAc)-terminated glycans by myeloid antigen presenting cells (APCs). Binds in a Ca(2+)-dependent manner to alpha- and beta-linked GalNAc residues on glycoprotein and glycolipid antigens, including alphaGalNAc- and Galbeta1-&gt;3GalNAc-O-Ser/Thr also known as Tn and T antigens, LacdiNAc epitope GalNAcbeta1-&gt;4GlcNAc and its derivative GalNAcbeta1-&gt;4-(Fucalpha1-&gt;3)GlcNAc, O-linked core 5 and 6 glycans, and GM2 and GD2 gangliosides. Acts as a signaling receptor at the interface of APC-T cell interactions. On immature dendritic cells, recognizes Tn antigen-carrying PTPRC/CD45 receptor on effector T cells and downregulates PTRPN/CD45 phosphatase activity with an impact on T cell activation threshold, cytokine production and proliferation. Modulates dendritic cell maturation toward a tolerogenic phenotype leading to generation of regulatory CD4-positive T cell subset with immune suppressive functions. Acts as an endocytic pattern recognition receptor involved in antitumor immunity. During tumorigenesis, recognizes Tn antigens and its sialylated forms Neu5Ac-Tn and Neu5Gc-Tn expressed on tumor cell mucins. On immature dendritic cells, can internalize Tn-terminated immunogens and target them to endolysosomal compartment for MHC class I and II antigen presentation to CD8-positive and CD4-positive T cells, respectively. The polypeptide is C-type lectin domain family 10 member A (Homo sapiens (Human)).